A 286-amino-acid polypeptide reads, in one-letter code: Prohibitin-2, mitochondrial (286 aa).

The Mitochondrial matrix portion of the chain corresponds to Met1–Pro13. A helical; Signal-anchor for type II membrane protein transmembrane segment spans residues Ala14–Leu32. Topologically, residues Thr33–Lys286 are mitochondrial intermembrane. Positions Lys186–Ala219 form a coiled coil.

The protein belongs to the prohibitin family. As to quaternary structure, component of a prohibitin multimeric complex in mitochondrial membranes. Mostly expressed in proliferative tissues, including vasculature, shoot and root apical tissues.

The protein localises to the mitochondrion inner membrane. Functionally, prohibitin probably acts as a holdase/unfoldase for the stabilization of newly synthesized mitochondrial proteins. The chain is Prohibitin-2, mitochondrial (PHB2) from Arabidopsis thaliana (Mouse-ear cress).